Here is a 210-residue protein sequence, read N- to C-terminus: Small ribosomal subunit protein uS4 (210 aa).

Residues 99 to 170 form the S4 RNA-binding domain; that stretch reads RRLDNAVFRA…NLEAVVRRGV (72 aa).

This sequence belongs to the universal ribosomal protein uS4 family. As to quaternary structure, part of the 30S ribosomal subunit. Contacts protein S5. The interaction surface between S4 and S5 is involved in control of translational fidelity.

Its function is as follows. One of the primary rRNA binding proteins, it binds directly to 16S rRNA where it nucleates assembly of the body of the 30S subunit. In terms of biological role, with S5 and S12 plays an important role in translational accuracy. In Desulfotalea psychrophila (strain LSv54 / DSM 12343), this protein is Small ribosomal subunit protein uS4.